A 361-amino-acid polypeptide reads, in one-letter code: Mitogen-activated protein kinase 1 (361 aa).

Positions tyrosine 28–leucine 316 constitute a Protein kinase domain. ATP-binding positions include isoleucine 34–valine 42 and lysine 57. Aspartate 152 (proton acceptor) is an active-site residue. Threonine 188 carries the post-translational modification Phosphothreonine. Residues threonine 188 to tyrosine 190 carry the TXY motif. Residue tyrosine 190 is modified to Phosphotyrosine.

Belongs to the protein kinase superfamily. CMGC Ser/Thr protein kinase family. MAP kinase subfamily. In terms of assembly, interacts with CDK2AP2. Requires Mg(2+) as cofactor. Post-translationally, dually phosphorylated on Thr-188 and Tyr-190, which activates the enzyme. Expressed in the central nervous system, kidney, liver, intestine and the hematopoietic system. Also found in heart, muscle, pancreas and lung.

Its subcellular location is the cytoplasm. It localises to the cytoskeleton. It is found in the microtubule organizing center. The protein resides in the centrosome. The protein localises to the spindle. It carries out the reaction L-seryl-[protein] + ATP = O-phospho-L-seryl-[protein] + ADP + H(+). The enzyme catalyses L-threonyl-[protein] + ATP = O-phospho-L-threonyl-[protein] + ADP + H(+). With respect to regulation, activated by tyrosine phosphorylation during the M phase of the meiotic cell cycle. Dephosphorylated and inactivated by DUSP1. In terms of biological role, serine/threonine kinase which acts as an essential component of the MAP kinase signal transduction pathway. Plays an important role in the MAPK/ERK cascade. Depending on the cellular context, this cascade mediates diverse biological functions such as cell growth, adhesion, survival and differentiation through the regulation of transcription, translation, cytoskeletal rearrangements. The MAPK/ERK cascade also plays a role in initiation and regulation of meiosis, mitosis, and postmitotic functions in differentiated cells by phosphorylating a number of transcription factors. Many of the substrates are localized in the nucleus, and seem to participate in the regulation of transcription upon stimulation. However, other substrates are found in the cytosol as well as in other cellular organelles, and those are responsible for processes such as translation, mitosis and apoptosis. Moreover, the MAPK/ERK cascade is also involved in the regulation of the endosomal dynamics, including lysosome processing and endosome cycling through the perinuclear recycling compartment (PNRC); as well as in the fragmentation of the Golgi apparatus during mitosis. Phosphorylates microtubule-associated protein 2 (MAP2), myelin basic protein (MBP) and Elk-1. Phosphorylates dual specificity protein phosphatase 1 (DUSP1) during meiosis, increasing its stability. Activated by M phase promoting factor (MPF). Plays a role in the spindle assembly checkpoint. This Xenopus laevis (African clawed frog) protein is Mitogen-activated protein kinase 1 (mapk1).